An 879-amino-acid polypeptide reads, in one-letter code: DNA methyltransferase A (879 aa).

It belongs to the methyltransferase superfamily.

The enzyme catalyses a 2'-deoxyadenosine in DNA + S-adenosyl-L-methionine = an N(6)-methyl-2'-deoxyadenosine in DNA + S-adenosyl-L-homocysteine + H(+). Functionally, recognizes the double-stranded sequence 5'-GACGAG-3' and methylates A-5, yielding m6A. m6A methylation functions as a transcriptional modifier, promoting transcription of a number of genes (at least scpA, hbs, rnhC, yumC and zapA). One studied mechanism is via transcriptional repressor ScoC (also called hpr) which binds to non-methylated scpA promoter; when the m6A target is methylated ScoC no longer binds and scpA transcription is up-regulated. Other mechanisms for gene expression regulation probably exist. Binds DNA with and without the target sequence. Although it resembles a restriction-modification system, it does not have detectable endonuclease activity under tested conditions. A gamma subtype methylase. The sequence is that of DNA methyltransferase A from Bacillus subtilis (strain 168).